We begin with the raw amino-acid sequence, 131 residues long: Hydrogenase maturation factor HypA (131 aa).

H2 is a Ni(2+) binding site. Residues C73, C76, C105, and C108 each coordinate Zn(2+).

This sequence belongs to the HypA/HybF family.

Functionally, involved in the maturation of [NiFe] hydrogenases. Required for nickel insertion into the metal center of the hydrogenase. This chain is Hydrogenase maturation factor HypA, found in Thermomicrobium roseum (strain ATCC 27502 / DSM 5159 / P-2).